Consider the following 492-residue polypeptide: Falcipain-3 (492 aa).

At 1–35 (MEYHMEYSPNEVIKQEREVFVGKEKSGSKFKRKRS) the chain is on the cytoplasmic side. Positions 1 to 242 (MEYHMEYSPN…LNLKTHGPFK (242 aa)) are cleaved as a propeptide — activation peptide. A Bipartite vacuolar targeting signal 1 motif is present at residues 16 to 25 (EREVFVGKEK). Residues 36 to 56 (IFIVLTVSICFMFALMLFYFT) form a helical; Signal-anchor for type II membrane protein membrane-spanning segment. The Lumenal segment spans residues 57 to 492 (RNENNKTLFT…GTEAYVPLLE (436 aa)). A glycan (N-linked (GlcNAc...) asparagine) is linked at Asn-61. A Bipartite vacuolar targeting signal 2 motif is present at residues 84–105 (KSESGKKFIVSKLEELISSYDK). A glycan (N-linked (GlcNAc...) asparagine) is linked at Asn-129. Positions 251-268 (EANYEDVIKKYKPADAKL) match the Nose motif; required for the correct folding of the mature form motif. Cystine bridges form between Cys-290/Cys-331, Cys-324/Cys-365, Cys-350/Cys-370, and Cys-419/Cys-480. Cys-293 is a catalytic residue. The active site involves His-425. The Arm motif; binds to host hemoglobin and required for the inhibitory interaction between the propeptide and the catalytic domain signature appears at 436-445 (DIYNEDTGRM). The active site involves Asn-455.

Belongs to the peptidase C1 family. Auto-cleavage occurs at acidic pH. The proenzyme is the predominant form in late trophozoites and both the pro and mature enzyme are present in schizonts.

The protein localises to the membrane. The protein resides in the vacuole. It is found in the cytoplasmic vesicle membrane. Its activity is regulated as follows. Inhibited by cysteine protease inhibitor ICP. Functionally, cysteine protease which cleaves native host hemoglobin and globin in the food vacuole during the asexual blood stage. Preferentially cleaves substrates which have an arginine at the P1 position and a leucine at the P2 position. In Plasmodium falciparum (isolate 3D7), this protein is Falcipain-3.